Here is a 148-residue protein sequence, read N- to C-terminus: uncharacterized protein (148 aa).

An N-terminal signal peptide occupies residues 1–19 (MLSNAKLLLSLAMASTALG). Residues Asn-41 and Asn-59 are each glycosylated (N-linked (GlcNAc...) asparagine). Asn-127 is lipidated: GPI-anchor amidated asparagine. Positions 128 to 148 (AANARAIPGALGLAGAVMMLL) are cleaved as a propeptide — removed in mature form.

The protein belongs to the SED1 family. In terms of processing, the GPI-anchor is attached to the protein in the endoplasmic reticulum and serves to target the protein to the cell surface. There, the glucosamine-inositol phospholipid moiety is cleaved off and the GPI-modified mannoprotein is covalently attached via its lipidless GPI glycan remnant to the 1,6-beta-glucan of the outer cell wall layer.

Its subcellular location is the secreted. It localises to the cell wall. It is found in the membrane. In terms of biological role, cell wall protein that plays a role in adaptation and resistance to cell wall stress. This is an uncharacterized protein from Saccharomyces cerevisiae (strain ATCC 204508 / S288c) (Baker's yeast).